The primary structure comprises 334 residues: MEERNKTLGEFIIENQKAFQYSSGELSRIINSIRLAAKVVNYKVNKAGLVDIIGAAGEQNIQGEDQQKLDVYANEVFIQTLINREIVCGIASEENDDFITVQGSDNCHNNKYVILMDPLDGSSNIDVNVSVGTIFSVFRRITPIGTPVTSEDFLQPGINQVAAGYVIYGTSTMLVYTTGFGVNGFTLNPAIGTFYLSHPNMKFPENGNIYSVNEGNYVHFPQGVKNYIKYCQREEEDRPYTSRYIGSLVADFHRNMIKGGIYIYPTSSKASKGKLRLLYECNPMAFIAEQAGGKATDGFGRIMEIQPTELHQRVPFFCGSKSMVEKAEEFMAAE.

Mg(2+)-binding residues include Glu93, Asp117, Leu119, and Asp120. Residues 120-123 (DGSS), Asn213, Tyr244, and Lys274 contribute to the substrate site. Residue Glu280 coordinates Mg(2+).

It belongs to the FBPase class 1 family. In terms of assembly, homotetramer. Requires Mg(2+) as cofactor.

The protein localises to the cytoplasm. It catalyses the reaction beta-D-fructose 1,6-bisphosphate + H2O = beta-D-fructose 6-phosphate + phosphate. It participates in carbohydrate biosynthesis; gluconeogenesis. This chain is Fructose-1,6-bisphosphatase class 1, found in Flavobacterium johnsoniae (strain ATCC 17061 / DSM 2064 / JCM 8514 / BCRC 14874 / CCUG 350202 / NBRC 14942 / NCIMB 11054 / UW101) (Cytophaga johnsonae).